A 306-amino-acid chain; its full sequence is Ornithine carbamoyltransferase (306 aa).

Residues Ser50–Thr53, Gln77, Arg101, and His128–Gln131 contribute to the carbamoyl phosphate site. Residues Asn160, Asp224, and Ser228–Met229 contribute to the L-ornithine site. Carbamoyl phosphate-binding positions include Cys261–Leu262 and Arg289.

The protein belongs to the aspartate/ornithine carbamoyltransferase superfamily. OTCase family.

The protein resides in the cytoplasm. The enzyme catalyses carbamoyl phosphate + L-ornithine = L-citrulline + phosphate + H(+). It participates in amino-acid biosynthesis; L-arginine biosynthesis; L-arginine from L-ornithine and carbamoyl phosphate: step 1/3. In terms of biological role, reversibly catalyzes the transfer of the carbamoyl group from carbamoyl phosphate (CP) to the N(epsilon) atom of ornithine (ORN) to produce L-citrulline. This chain is Ornithine carbamoyltransferase, found in Aquifex aeolicus (strain VF5).